Reading from the N-terminus, the 155-residue chain is Protein SprT-like (155 aa).

The SprT-like domain occupies 7–145 (QRHMEEVSLQ…GSCGGKLIQI (139 aa)). Residue histidine 67 coordinates Zn(2+). Glutamate 68 is a catalytic residue. Histidine 71 contributes to the Zn(2+) binding site.

This sequence belongs to the SprT family. Zn(2+) is required as a cofactor.

It is found in the cytoplasm. This chain is Protein SprT-like, found in Listeria monocytogenes serotype 4a (strain HCC23).